Here is a 268-residue protein sequence, read N- to C-terminus: Tryptophan synthase alpha chain (268 aa).

Catalysis depends on proton acceptor residues glutamate 49 and aspartate 60.

This sequence belongs to the TrpA family. As to quaternary structure, tetramer of two alpha and two beta chains.

It catalyses the reaction (1S,2R)-1-C-(indol-3-yl)glycerol 3-phosphate + L-serine = D-glyceraldehyde 3-phosphate + L-tryptophan + H2O. The protein operates within amino-acid biosynthesis; L-tryptophan biosynthesis; L-tryptophan from chorismate: step 5/5. In terms of biological role, the alpha subunit is responsible for the aldol cleavage of indoleglycerol phosphate to indole and glyceraldehyde 3-phosphate. This chain is Tryptophan synthase alpha chain, found in Salmonella choleraesuis (strain SC-B67).